A 116-amino-acid polypeptide reads, in one-letter code: Large ribosomal subunit protein bL17 (116 aa).

The protein belongs to the bacterial ribosomal protein bL17 family. In terms of assembly, part of the 50S ribosomal subunit. Contacts protein L32.

This is Large ribosomal subunit protein bL17 from Prochlorococcus marinus (strain MIT 9515).